Consider the following 174-residue polypeptide: NADH-quinone oxidoreductase subunit B 2 (174 aa).

Cys-38, Cys-39, Cys-104, and Cys-133 together coordinate [4Fe-4S] cluster.

Belongs to the complex I 20 kDa subunit family. As to quaternary structure, NDH-1 is composed of 14 different subunits. Subunits NuoB, C, D, E, F, and G constitute the peripheral sector of the complex. It depends on [4Fe-4S] cluster as a cofactor.

The protein localises to the cell membrane. It catalyses the reaction a quinone + NADH + 5 H(+)(in) = a quinol + NAD(+) + 4 H(+)(out). Functionally, NDH-1 shuttles electrons from NADH, via FMN and iron-sulfur (Fe-S) centers, to quinones in the respiratory chain. The immediate electron acceptor for the enzyme in this species is believed to be ubiquinone. Couples the redox reaction to proton translocation (for every two electrons transferred, four hydrogen ions are translocated across the cytoplasmic membrane), and thus conserves the redox energy in a proton gradient. This chain is NADH-quinone oxidoreductase subunit B 2, found in Chloroflexus aurantiacus (strain ATCC 29366 / DSM 635 / J-10-fl).